A 288-amino-acid polypeptide reads, in one-letter code: Homoserine kinase (288 aa).

Residue 78–88 (PLARGLGSSSS) participates in ATP binding.

Belongs to the GHMP kinase family. Homoserine kinase subfamily.

The protein localises to the cytoplasm. The catalysed reaction is L-homoserine + ATP = O-phospho-L-homoserine + ADP + H(+). The protein operates within amino-acid biosynthesis; L-threonine biosynthesis; L-threonine from L-aspartate: step 4/5. Its function is as follows. Catalyzes the ATP-dependent phosphorylation of L-homoserine to L-homoserine phosphate. The chain is Homoserine kinase from Streptococcus agalactiae serotype III (strain NEM316).